Consider the following 467-residue polypeptide: Keratin, type 1 cytoskeletal 11 (467 aa).

The segment at 1-100 (MSYSSFSIAQ…GGTDFLLGTS (100 aa)) is head. The segment covering 12–30 (SRVPSLSGTRSSSSYSLKS) has biased composition (low complexity). The disordered stretch occupies residues 12-32 (SRVPSLSGTRSSSSYSLKSDL). The interval 101–137 (GKEAMQNLNDRLADYLARVRSLEDRNRELEQKIREWY) is coil 1A. One can recognise an IF rod domain in the interval 101 to 413 (GKEAMQNLND…TLLEGDAGRS (313 aa)). Residues 138–156 (EKQGAGTKRKDFSHYFKII) are linker 1. The coil 1B stretch occupies residues 157 to 248 (ADLQNQINAG…SHDEDMKALR (92 aa)). Positions 249 to 268 (SQLGGQVNVEVDAAPAEDLT) are linker 12. Positions 269–416 (KKLEIIRQRY…EGDAGRSHSS (148 aa)) are coil 2. The segment at 409–430 (DAGRSHSSSHLSSTVSKDKVPV) is disordered. The tail stretch occupies residues 417–463 (SHLSSTVSKDKVPVSSPNVITKVRTIVEEKINGQVISKKEYEGSPDQ).

It belongs to the intermediate filament family. In terms of assembly, heterotetramer of two type I and two type II keratins. In terms of tissue distribution, expressed in the outermost cell layers of skin epidermis (at protein level).

This Protopterus aethiopicus (Marbled lungfish) protein is Keratin, type 1 cytoskeletal 11.